Reading from the N-terminus, the 155-residue chain is MASRNPPPQDYESDDESYEVLDLTEYARRHHWWNRVFGHSSGPMVEKYSVATQIVMGGVTGWCAGFLFQKVGKLAATAVGGGFLLLQVASHSGYVQIDWKRVEKDVNKAKRQIKKRANKAAPEINNIIEEATDFIKQNIVISSGFVGGFLLGLAS.

Residues 1–47 (MASRNPPPQDYESDDESYEVLDLTEYARRHHWWNRVFGHSSGPMVEK) lie on the Cytoplasmic side of the membrane. Residues Ser13 and Ser17 each carry the phosphoserine modification. Tyr18 is subject to Phosphotyrosine; by SRC. A YXXL motif is present at residues 18–21 (YEVL). The helical transmembrane segment at 48–68 (YSVATQIVMGGVTGWCAGFLF) threads the bilayer. The Mitochondrial intermembrane portion of the chain corresponds to 69 to 74 (QKVGKL). Residues 75–95 (AATAVGGGFLLLQVASHSGYV) form a helical membrane-spanning segment. The Cytoplasmic portion of the chain corresponds to 96–133 (QIDWKRVEKDVNKAKRQIKKRANKAAPEINNIIEEATD). Lys119 participates in a covalent cross-link: Glycyl lysine isopeptide (Lys-Gly) (interchain with G-Cter in ubiquitin). Residues 134–154 (FIKQNIVISSGFVGGFLLGLA) traverse the membrane as a helical segment. A topological domain (mitochondrial intermembrane) is located at residue Ser155.

This sequence belongs to the FUN14 family. Interacts (via YXXL motif) with MAP1 LC3 family proteins MAP1LC3A, MAP1LC3B and GABARAP. Interacts with DNM1L/DPR1. Interacts with GPX4. Post-translationally, phosphorylation at Ser-13 by CK2 and at Tyr-18 by SRC inhibits activation of mitophagy. Following hypoxia, dephosphorylated at Tyr-18, leading to interaction with MAP1 LC3 family proteins and triggering mitophagy. Dephosphorylation is mediated by PGAM5. Phosphorylated by ULK1 at Ser-17 which enhances FUNDC1 binding to LC3. In terms of processing, ubiquitinated on Lys-119. Deubiquitinated by USP19; leading to hypoxia-induced DRP1 oligomerization and GTPase activity.

The protein resides in the mitochondrion outer membrane. Functionally, integral mitochondrial outer-membrane protein that mediates the formation of mitochondria-associated endoplasmic reticulum membranes (MAMs). In turn, mediates angiogenesis and neoangiogenesis through interference with intracellular Ca(2+) communication and regulation of the vascular endothelial growth factor receptor KDR/VEGFR2 expression at both mRNA and protein levels. Also acts as an activator of hypoxia-induced mitophagy, an important mechanism for mitochondrial quality and homeostasis, by interacting with and recruiting LC3 protein family to mitochondria. Mechanistically, recruits DRP1 at ER-mitochondria contact sites leading to DRP1 oligomerization and GTPase activity to facilitate mitochondrial fission during hypoxia. Additionally, plays a role in hepatic ferroptosis by interacting directly with glutathione peroxidase/GPX4 to facilitate its recruitment into mitochondria through TOM/TIM complex where it is degraded by mitophagy. This is FUN14 domain-containing protein 1 (Fundc1) from Mus musculus (Mouse).